A 2201-amino-acid polypeptide reads, in one-letter code: Voltage-dependent T-type calcium channel subunit alpha-1I (2201 aa).

A disordered region spans residues 1 to 45 (MADSNLPPSSAAAPAPEPGITEQPGPRSPPPSPPGLEEPLEGTNP). Residues 1-76 (MADSNLPPSS…RNWCIKMVCN (76 aa)) lie on the Cytoplasmic side of the membrane. Residues 26-36 (PRSPPPSPPGL) show a composition bias toward pro residues. Residues 64–399 (TSPRNWCIKM…LCLVVIATQF (336 aa)) form an I repeat. The helical transmembrane segment at 77 to 97 (PWFECVSMLVILLNCVTLGMY) threads the bilayer. Over 98–115 (QPCDDMECLSDRCKILQV) the chain is Extracellular. A helical membrane pass occupies residues 116 to 137 (FDDFIFIFFAMEMVLKMVALGI). Over 138-146 (FGKKCYLGD) the chain is Cytoplasmic. A helical membrane pass occupies residues 147 to 166 (TWNRLDFFIVMAGMVEYSLD). Residues 167–171 (LQNIN) lie on the Extracellular side of the membrane. N-linked (GlcNAc...) asparagine glycosylation occurs at N171. A helical membrane pass occupies residues 172-189 (LSAIRTVRVLRPLKAINR). The Cytoplasmic portion of the chain corresponds to 190 to 209 (VPSMRILVNLLLDTLPMLGN). The chain crosses the membrane as a helical span at residues 210 to 230 (VLLLCFFVFFIFGIIGVQLWA). At 231–371 (GLLRNRCFLE…YYVMDAHSFY (141 aa)) the chain is on the extracellular side. N-linked (GlcNAc...) asparagine glycosylation is found at N242 and N309. A helical transmembrane segment spans residues 372 to 396 (NFIYFILLIIVGSFFMINLCLVVIA). The Cytoplasmic segment spans residues 397–598 (TQFSETKQRE…EKLRGIVDSK (202 aa)). Disordered stretches follow at residues 463 to 500 (QAMG…TPHT) and 513 to 579 (PSSC…AARL). A compositionally biased stretch (low complexity) spans 545–554 (SAEAEANGDG). Residues 584-823 (WRETREKLRG…LLVAILVEGF (240 aa)) form an II repeat. The chain crosses the membrane as a helical span at residues 599-619 (YFNRGIMMAILVNTVSMGIEH). At 620-632 (HEQPEELTNILEI) the chain is on the extracellular side. Residues 633–654 (CNVVFTSMFALEMILKLAAFGL) form a helical membrane-spanning segment. The Cytoplasmic portion of the chain corresponds to 655-660 (FDYLRN). Residues 661–679 (PYNIFDSIIVIISIWEIVG) traverse the membrane as a helical segment. Over 680-687 (QADGGLSV) the chain is Extracellular. A helical transmembrane segment spans residues 688 to 711 (LRTFRLLRVLKLVRFMPALRRQLV). Topologically, residues 712-722 (VLMKTMDNVAT) are cytoplasmic. Residues 723–743 (FCMLLMLFIFIFSILGMHIFG) form a helical membrane-spanning segment. Residues 744–795 (CKFSLRTDTGDTVPDRKNFDSLLWAIVTVFQILTQEDWNVVLYNGMASTTPW) are Extracellular-facing. The chain crosses the membrane as a helical span at residues 796–820 (ASLYFVALMTFGNYVLFNLLVAILV). The Cytoplasmic portion of the chain corresponds to 821–1125 (EGFQAEGDAN…NKFRILCQTI (305 aa)). The tract at residues 936–969 (WGRSGTWASRRSSWNSLKHKPPSAEHESLLSGEG) is disordered. A compositionally biased stretch (polar residues) spans 941-951 (TWASRRSSWNS). S1017 bears the Phosphoserine mark. One copy of the III repeat lies at 1116 to 1393 (NKFRILCQTI…MFVGVVVENF (278 aa)). Residues 1126 to 1148 (IAHKLFDYVVLAFIFLNCITIAL) form a helical membrane-spanning segment. The Extracellular portion of the chain corresponds to 1149–1166 (ERPQIEAGSTERIFLTVS). A helical transmembrane segment spans residues 1167–1187 (NYIFTAIFVGEMTLKVVSLGL). At 1188–1197 (YFGEQAYLRS) the chain is on the cytoplasmic side. Residues 1198 to 1217 (SWNVLDGFLVFVSIIDIVVS) traverse the membrane as a helical segment. Residues 1218–1231 (VASAGGAKILGVLR) are Extracellular-facing. The helical transmembrane segment at 1232-1253 (VLRLLRTLRPLRVISRAPGLKL) threads the bilayer. The Cytoplasmic portion of the chain corresponds to 1254–1263 (VVETLISSLK). Residues 1264 to 1287 (PIGNIVLICCAFFIIFGILGVQLF) traverse the membrane as a helical segment. Residues 1288-1364 (KGKFYHCLGV…DQQPVTNHNP (77 aa)) are Extracellular-facing. 2 N-linked (GlcNAc...) asparagine glycosylation sites follow: N1301 and N1304. A helical transmembrane segment spans residues 1365–1390 (WMLLYFISFLLIVSFFVLNMFVGVVV). The Cytoplasmic segment spans residues 1391 to 1445 (ENFHKCRQHQEAEEARRREEKRLRRLEKKRRKAQRLPYYATYCPTRLLIHSMCTS). One copy of the IV repeat lies at 1431 to 1692 (TYCPTRLLIH…VVVAVLMKHL (262 aa)). Residues 1446 to 1466 (HYLDIFITFIICLNVVTMSLE) form a helical membrane-spanning segment. Topologically, residues 1467 to 1480 (HYNQPTSLETALKY) are extracellular. Residues 1481–1502 (CNYMFTTVFVLEAVLKLVAFGL) form a helical membrane-spanning segment. At 1503–1509 (RRFFKDR) the chain is on the cytoplasmic side. A helical membrane pass occupies residues 1510 to 1528 (WNQLDLAIVLLSVMGITLE). The Extracellular portion of the chain corresponds to 1529-1542 (EIEINAALPINPTI). A helical membrane pass occupies residues 1543–1566 (IRIMRVLRIARVLKLLKMATGMRA). Topologically, residues 1567–1580 (LLDTVVQALPQVGN) are cytoplasmic. A helical transmembrane segment spans residues 1581–1601 (LGLLFMLLFFIYAALGVELFG). The Extracellular portion of the chain corresponds to 1602–1664 (KLVCNDENPC…RSCLSSLQFV (63 aa)). Residues 1665–1692 (SPLYFVSFVLTAQFVLINVVVAVLMKHL) form a helical membrane-spanning segment. The Cytoplasmic segment spans residues 1693–1835 (DDSNKEAQED…EVQLAETEAF (143 aa)). Disordered stretches follow at residues 1846–1876 (LLGD…PEPM), 1916–1938 (LKHD…PLLQ), 1992–2045 (SDTS…TRRR), 2057–2105 (RGLR…HSET), and 2126–2201 (LTPA…KRKR). Residues 1992-2007 (SDTSLDASPSSSAGSL) are compositionally biased toward low complexity. 2 stretches are compositionally biased toward polar residues: residues 2008–2019 (QTTLEDSLTLSD) and 2066–2075 (HSSGGSTSPG). Positions 2077 to 2090 (THHDSMDPSDEEGR) are enriched in basic and acidic residues.

Belongs to the calcium channel alpha-1 subunit (TC 1.A.1.11) family. CACNA1I subfamily. As to quaternary structure, interacts with CATSPER1 and CATSPER2, leading to suppress T-type calcium channel activity. In response to raising of intracellular calcium, the T-type channels are activated by CaM-kinase II. In terms of tissue distribution, brain.

The protein resides in the membrane. The enzyme catalyses Ca(2+)(in) = Ca(2+)(out). Functionally, voltage-sensitive calcium channels (VSCC) mediate the entry of calcium ions into excitable cells and are also involved in a variety of calcium-dependent processes, including muscle contraction, hormone or neurotransmitter release, gene expression, cell motility, cell division and cell death. This channel gives rise to T-type calcium currents. T-type calcium channels belong to the 'low-voltage activated (LVA)' group and are strongly blocked by nickel and mibefradil. A particularity of this type of channels is an opening at quite negative potentials, and a voltage-dependent inactivation. T-type channels serve pacemaking functions in both central neurons and cardiac nodal cells and support calcium signaling in secretory cells and vascular smooth muscle. They may also be involved in the modulation of firing patterns of neurons which is important for information processing as well as in cell growth processes. Gates in voltage ranges similar to, but higher than alpha 1G or alpha 1H. In terms of biological role, voltage-sensitive calcium channels (VSCC) mediate the entry of calcium ions into excitable cells and are also involved in a variety of calcium-dependent processes, including muscle contraction, hormone or neurotransmitter release, gene expression, cell motility, cell division and cell death. This channel gives rise to T-type calcium currents. The sequence is that of Voltage-dependent T-type calcium channel subunit alpha-1I (Cacna1i) from Rattus norvegicus (Rat).